The chain runs to 358 residues: Nuclear receptor subfamily 1 group I member 3 (358 aa).

The segment at residues 18-93 (PRNCVVCGDR…VGMRKDMILS (76 aa)) is a DNA-binding region (nuclear receptor). An NR C4-type zinc finger spans residues 21-41 (CVVCGDRATGYHFHALTCEGC). At T48 the chain carries Phosphothreonine; by PKC. An NR C4-type zinc finger spans residues 57 to 81 (CPFAGRCEVSKAQRRHCPACRLQKC). One can recognise an NR LBD domain in the interval 119-358 (QQKELVQILL…MTPLLGEICS (240 aa)).

Belongs to the nuclear hormone receptor family. NR1 subfamily. In terms of assembly, heterodimer of NR1I3 and RXR. Interacts with PSMC4. Interacts with ECT2. Directly interacts with DNAJC7; this complex may also include HSP90. Interacts with CRY1. Interacts with CRY2 in a ligand-dependent manner. In terms of processing, phosphorylated at Thr-48 by PKC, dephosphorylation of Thr-48 is required for nuclear translocation and activation. Predominantly expressed in liver.

It localises to the nucleus. The protein resides in the cytoplasm. The protein localises to the cytoskeleton. Binds and transactivates the retinoic acid response elements that control expression of the retinoic acid receptor beta 2 and alcohol dehydrogenase 3 genes. Transactivates both the phenobarbital responsive element module of the human CYP2B6 gene and the CYP3A4 xenobiotic response element. This chain is Nuclear receptor subfamily 1 group I member 3 (Nr1i3), found in Mus musculus (Mouse).